The primary structure comprises 389 residues: Chalcone synthase 1 (389 aa).

The active site involves cysteine 163.

The protein belongs to the thiolase-like superfamily. Chalcone/stilbene synthases family.

The catalysed reaction is (E)-4-coumaroyl-CoA + 3 malonyl-CoA + 3 H(+) = 2',4,4',6'-tetrahydroxychalcone + 3 CO2 + 4 CoA. It participates in secondary metabolite biosynthesis; flavonoid biosynthesis. Its function is as follows. The primary product of this enzyme is 4,2',4',6'-tetrahydroxychalcone (also termed naringenin-chalcone or chalcone) which can under specific conditions spontaneously isomerize into naringenin. This chain is Chalcone synthase 1 (CHS1), found in Citrus sinensis (Sweet orange).